We begin with the raw amino-acid sequence, 309 residues long: Caspase-7 (309 aa).

The propeptide at 1–24 (MSGDQHADRSSGEKSNGDQDDTVD) is N-terminally processed. Positions 1–31 (MSGDQHADRSSGEKSNGDQDDTVDAKPDRSS) are enriched in basic and acidic residues. Residues 1-53 (MSGDQHADRSSGEKSNGDQDDTVDAKPDRSSRLSLFAKKKKNGEEEQPKSSLS) are disordered. The interval 39-42 (KKKN) is exosite. The tract at residues 81–92 (KNFEDKTGMGTR) is loop L1. Active-site residues include His149 and Cys191. The interval 192–201 (RGSEFDEGIQ) is loop L2. A propeptide spanning residues 204–214 (SGPANDTLETD) is cleaved from the precursor. The interval 234–246 (VPGYYSWRNPGRG) is loop L3. Positions 282–296 (ESQSDDPRFSEKKQI) are loop L4.

The protein belongs to the peptidase C14A family. In terms of assembly, heterotetramer that consists of two anti-parallel arranged heterodimers, each one formed by a 20 kDa (p20) and a 11 kDa (p11) subunit. Cleavage by different proteases, such as granzyme B (GZMB), caspase-1 (CASP1), caspase-8 (CASP8) or caspase-9 (CASP9) generate the two active subunits. Its involvement in different programmed cell death processes is probably specified by the protease that activates CASP7. Cleaved and activated by initiator caspases (CASP8 and/or CASP9), leading to execution phase of apoptosis. Cleavage and maturation by GZMB regulates granzyme-mediated programmed cell death. Cleaved and activated by CASP1 in response to bacterial infection.

The protein resides in the cytoplasm. Its subcellular location is the cytosol. It localises to the nucleus. It is found in the secreted. The protein localises to the extracellular space. It catalyses the reaction Strict requirement for an Asp residue at position P1 and has a preferred cleavage sequence of Asp-Glu-Val-Asp-|-.. During activation, the N-terminal disordered prodomain is removed by cleavage. Concomitantly, double cleavage gives rise to a large Caspase-7 subunit p20 and a small Caspase-7 subunit p11. The two large and two small subunits then assemble to form the active CASP7 complex. Can be cleaved and activated by different caspases, depending on the context. Cleaved and activated by initiator caspases (CASP8 and/or CASP9), leading to execution phase of apoptosis. Cleavage and maturation by GZMB regulates granzyme-mediated programmed cell death. Cleavage and maturation by CASP1 regulates pyroptosis. Inhibited by BIRC6; following inhibition of BIRC6-caspase binding by DIABLO/SMAC, BIRC6 is subjected to caspase cleavage, leading to an increase in active caspases. Functionally, thiol protease involved in different programmed cell death processes, such as apoptosis, pyroptosis or granzyme-mediated programmed cell death, by proteolytically cleaving target proteins. Has a marked preference for Asp-Glu-Val-Asp (DEVD) consensus sequences, with some plasticity for alternate non-canonical sequences. Its involvement in the different programmed cell death processes is probably determined by upstream proteases that activate CASP7. Acts as an effector caspase involved in the execution phase of apoptosis: following cleavage and activation by initiator caspases (CASP8 and/or CASP9), mediates execution of apoptosis by catalyzing cleavage of proteins. Compared to CASP3, acts as a minor executioner caspase and cleaves a limited set of target proteins. Acts as a key regulator of the inflammatory response in response to bacterial infection by catalyzing cleavage and activation of the sphingomyelin phosphodiesterase SMPD1 in the extracellular milieu, thereby promoting membrane repair. Cleaves BIRC6 following inhibition of BIRC6-caspase binding by DIABLO/SMAC. This chain is Caspase-7, found in Gallus gallus (Chicken).